The primary structure comprises 301 residues: Tyrosine recombinase XerC (301 aa).

The Core-binding (CB) domain maps to 1 to 85 (MELISLFKQY…ALRSFYRFLV (85 aa)). A Tyr recombinase domain is found at 106–292 (KLPHFFYEKE…TKEKLQESYR (187 aa)). Residues arginine 147, lysine 171, histidine 244, arginine 247, and histidine 270 contribute to the active site. Catalysis depends on tyrosine 279, which acts as the O-(3'-phospho-DNA)-tyrosine intermediate.

Belongs to the 'phage' integrase family. XerC subfamily. As to quaternary structure, forms a cyclic heterotetrameric complex composed of two molecules of XerC and two molecules of XerD.

Its subcellular location is the cytoplasm. Its function is as follows. Site-specific tyrosine recombinase, which acts by catalyzing the cutting and rejoining of the recombining DNA molecules. The XerC-XerD complex is essential to convert dimers of the bacterial chromosome into monomers to permit their segregation at cell division. It also contributes to the segregational stability of plasmids. The chain is Tyrosine recombinase XerC from Pediococcus pentosaceus (strain ATCC 25745 / CCUG 21536 / LMG 10740 / 183-1w).